The following is a 631-amino-acid chain: Bromodomain-containing protein 9 (631 aa).

Disordered regions lie at residues 1–26 (MGKK…PLEK) and 39–116 (VTEL…TLPK). 2 stretches are compositionally biased toward basic and acidic residues: residues 9-26 (RPEW…PLEK) and 50-63 (SYYD…WERH). Residues 64–73 (KEKKKKKKKK) are compositionally biased toward basic residues. Over residues 74 to 85 (SEKEKYADDDER) the composition is skewed to basic and acidic residues. Basic residues predominate over residues 86-96 (RRRKEEKKKKR). The Bromo domain maps to 166–270 (NEATPHQQLL…HTGFKMMSKQ (105 aa)). Residues 244–246 (VYN) form a histone H4K5ac H4K8ac and histone H4K5bu H4K8bu binding region. The disordered stretch occupies residues 571–631 (ASVDRVGSRP…SPEPGSTANS (61 aa)). The span at 581–590 (SSNLSSLSNA) shows a compositional bias: low complexity.

As to quaternary structure, binds acetylated histones H3 and H4. Binds butyrylated histone H4.

The protein localises to the nucleus. In terms of biological role, plays a role in chromatin remodeling and regulation of transcription. Acts as a chromatin reader that recognizes and binds acylated histones: binds histones that are acetylated and/or butyrylated. The polypeptide is Bromodomain-containing protein 9 (brd9) (Danio rerio (Zebrafish)).